We begin with the raw amino-acid sequence, 44 residues long: Photosystem I reaction center subunit IX (44 aa).

Residues 7-27 (YLSVAPVLTTLWFGSLAGLLI) traverse the membrane as a helical segment.

The protein belongs to the PsaJ family.

It is found in the plastid. The protein localises to the chloroplast thylakoid membrane. Its function is as follows. May help in the organization of the PsaE and PsaF subunits. This is Photosystem I reaction center subunit IX from Nymphaea alba (White water-lily).